Here is a 341-residue protein sequence, read N- to C-terminus: Src kinase-associated phosphoprotein 2 (341 aa).

Residues 54–95 (FKDRRDEEFPEPDEADTNDGGSLHSEQTDRDDENAYDGVQQS) are disordered. The span at 61–70 (EFPEPDEADT) shows a compositional bias: acidic residues. The region spanning 105–208 (AVLKSGYLEK…WVEHIDFLIK (104 aa)) is the PH domain. Residues 246 to 265 (EEDVPQPSKPKVTLVNKPPP) form a disordered region. Positions 279-340 (DYANYFQGLW…PKEYLLELYV (62 aa)) constitute an SH3 domain.

Belongs to the SKAP family. In terms of processing, phosphorylated on tyrosines.

The protein resides in the cytoplasm. In terms of biological role, may be involved in B-cell and macrophage adhesion processes. May play a role in src signaling pathway. This is Src kinase-associated phosphoprotein 2 (skap2) from Danio rerio (Zebrafish).